Consider the following 95-residue polypeptide: Non-specific lipid-transfer protein (95 aa).

Disulfide bonds link cysteine 4–cysteine 52, cysteine 14–cysteine 29, and cysteine 50–cysteine 90.

It belongs to the plant LTP family. As to expression, seeds.

Plant non-specific lipid-transfer proteins transfer phospholipids as well as galactolipids across membranes. May play a role in wax or cutin deposition in the cell walls of expanding epidermal cells and certain secretory tissues. The sequence is that of Non-specific lipid-transfer protein from Eleusine coracana (Indian finger millet).